We begin with the raw amino-acid sequence, 118 residues long: Large ribosomal subunit protein bL19 (118 aa).

This sequence belongs to the bacterial ribosomal protein bL19 family.

In terms of biological role, this protein is located at the 30S-50S ribosomal subunit interface and may play a role in the structure and function of the aminoacyl-tRNA binding site. The chain is Large ribosomal subunit protein bL19 from Campylobacter lari (strain RM2100 / D67 / ATCC BAA-1060).